Here is a 295-residue protein sequence, read N- to C-terminus: Tyrosine recombinase XerC (295 aa).

A Core-binding (CB) domain is found at 1–84 (MTLEEQFLSY…SLKSFYRLLT (84 aa)). A Tyr recombinase domain is found at 105–289 (KLPEFFYQDE…SMQHLTAEYR (185 aa)). Residues Arg145, Lys169, His241, Arg244, and His267 contribute to the active site. Residue Tyr276 is the O-(3'-phospho-DNA)-tyrosine intermediate of the active site.

This sequence belongs to the 'phage' integrase family. XerC subfamily. In terms of assembly, forms a cyclic heterotetrameric complex composed of two molecules of XerC and two molecules of XerD.

It is found in the cytoplasm. Its function is as follows. Site-specific tyrosine recombinase, which acts by catalyzing the cutting and rejoining of the recombining DNA molecules. The XerC-XerD complex is essential to convert dimers of the bacterial chromosome into monomers to permit their segregation at cell division. It also contributes to the segregational stability of plasmids. This Lactobacillus leichmannii protein is Tyrosine recombinase XerC.